A 136-amino-acid polypeptide reads, in one-letter code: Outer envelope pore protein 16-4, chloroplastic (136 aa).

Positions 1–59 are contains 4 beta strands; sequence MEEELLSAVPCSSLTVESVLRVATAGGLYGLCAGPRDARKIGLSGVSQASFVAKSIGRF. A run of 4 helical transmembrane segments spans residues 18–34, 56–72, 86–102, and 110–126; these read SVLR…LCAG, IGRF…VFTM, WVNA…AVAI, and VVGM…LANC.

Belongs to the Tim17/Tim22/Tim23 family. Plastid outer envelope porin OEP16 (TC 1.B.30) subfamily. As to quaternary structure, homodimer and oligomers in membrane.

The protein localises to the plastid. The protein resides in the chloroplast outer membrane. Functionally, voltage-dependent high-conductance channel with a slight cation-selectivity; selective for amino acids but excludes triosephosphates or uncharged sugars. Non-essential amino acid-selective channel protein and translocation pore for NADPH:protochlorophyllide oxidoreductase A (PORA) and possibly PORB. The protein is Outer envelope pore protein 16-4, chloroplastic (OEP164) of Arabidopsis thaliana (Mouse-ear cress).